A 194-amino-acid polypeptide reads, in one-letter code: Xanthine phosphoribosyltransferase (194 aa).

Xanthine is bound by residues Leu-20 and Asn-27. 128-132 (ANGQA) contacts 5-phospho-alpha-D-ribose 1-diphosphate. Lys-156 contributes to the xanthine binding site.

The protein belongs to the purine/pyrimidine phosphoribosyltransferase family. Xpt subfamily. As to quaternary structure, homodimer.

It localises to the cytoplasm. It catalyses the reaction XMP + diphosphate = xanthine + 5-phospho-alpha-D-ribose 1-diphosphate. It participates in purine metabolism; XMP biosynthesis via salvage pathway; XMP from xanthine: step 1/1. Its function is as follows. Converts the preformed base xanthine, a product of nucleic acid breakdown, to xanthosine 5'-monophosphate (XMP), so it can be reused for RNA or DNA synthesis. In Oceanobacillus iheyensis (strain DSM 14371 / CIP 107618 / JCM 11309 / KCTC 3954 / HTE831), this protein is Xanthine phosphoribosyltransferase.